The sequence spans 186 residues: Allergen Fel d 4 (186 aa).

An N-terminal signal peptide occupies residues 1-15 (MKLLLLCLGLILVCA). Asn51 and Asn66 each carry an N-linked (GlcNAc...) asparagine glycan. Cys81 and Cys171 form a disulfide bridge.

Belongs to the calycin superfamily. Lipocalin family. As to expression, abundant in urine (at protein level).

Its subcellular location is the secreted. May be a pheromone carrier. Acts as a kairomone, detected by the prey vomeronasal organ and inducing fear reactions in mice. This chain is Allergen Fel d 4, found in Felis catus (Cat).